A 388-amino-acid polypeptide reads, in one-letter code: Peptide chain release factor subunit 1 (388 aa).

The protein belongs to the eukaryotic release factor 1 family. As to quaternary structure, heterodimer of two subunits, one of which binds GTP.

Its subcellular location is the cytoplasm. In terms of biological role, directs the termination of nascent peptide synthesis (translation) in response to the termination codons UAA, UAG and UGA. The protein is Peptide chain release factor subunit 1 (prf1) of Pyrobaculum aerophilum (strain ATCC 51768 / DSM 7523 / JCM 9630 / CIP 104966 / NBRC 100827 / IM2).